The following is a 180-amino-acid chain: Shikimate kinase (180 aa).

Gly14 to Cys19 lines the ATP pocket. Ser18 contributes to the Mg(2+) binding site. Substrate contacts are provided by Asp36, Arg60, and Gly82. Arg120 lines the ATP pocket. Arg139 lines the substrate pocket.

It belongs to the shikimate kinase family. In terms of assembly, monomer. Requires Mg(2+) as cofactor.

It is found in the cytoplasm. It catalyses the reaction shikimate + ATP = 3-phosphoshikimate + ADP + H(+). Its pathway is metabolic intermediate biosynthesis; chorismate biosynthesis; chorismate from D-erythrose 4-phosphate and phosphoenolpyruvate: step 5/7. Its function is as follows. Catalyzes the specific phosphorylation of the 3-hydroxyl group of shikimic acid using ATP as a cosubstrate. In Xanthomonas euvesicatoria pv. vesicatoria (strain 85-10) (Xanthomonas campestris pv. vesicatoria), this protein is Shikimate kinase.